The primary structure comprises 474 residues: Uronate isomerase (474 aa).

Belongs to the metallo-dependent hydrolases superfamily. Uronate isomerase family.

It carries out the reaction D-glucuronate = D-fructuronate. The catalysed reaction is aldehydo-D-galacturonate = keto-D-tagaturonate. It participates in carbohydrate metabolism; pentose and glucuronate interconversion. The chain is Uronate isomerase from Photorhabdus laumondii subsp. laumondii (strain DSM 15139 / CIP 105565 / TT01) (Photorhabdus luminescens subsp. laumondii).